The chain runs to 192 residues: Ribosomal RNA large subunit methyltransferase E (192 aa).

Residues G48, F50, D67, D85, and D107 each contribute to the S-adenosyl-L-methionine site. The active-site Proton acceptor is the K147.

Belongs to the class I-like SAM-binding methyltransferase superfamily. RNA methyltransferase RlmE family.

The protein localises to the cytoplasm. It carries out the reaction uridine(2552) in 23S rRNA + S-adenosyl-L-methionine = 2'-O-methyluridine(2552) in 23S rRNA + S-adenosyl-L-homocysteine + H(+). Functionally, specifically methylates the uridine in position 2552 of 23S rRNA at the 2'-O position of the ribose in the fully assembled 50S ribosomal subunit. This chain is Ribosomal RNA large subunit methyltransferase E, found in Borrelia garinii subsp. bavariensis (strain ATCC BAA-2496 / DSM 23469 / PBi) (Borreliella bavariensis).